The following is a 147-amino-acid chain: Hemoglobin subunit beta-1 (147 aa).

In terms of domain architecture, Globin spans 3-147 (EWTATERTHI…VVSALGRQYH (145 aa)). Heme b-binding residues include His64 and His93.

It belongs to the globin family. In terms of assembly, hb 1 is a heterotetramer of two alpha-1 and two beta-1 chains. Hb 2 is a heterotetramer of two alpha-2 and two beta-1 chains. In terms of tissue distribution, red blood cells.

Its function is as follows. Involved in oxygen transport from gills to the various peripheral tissues. The sequence is that of Hemoglobin subunit beta-1 (hbb1) from Boreogadus saida (Polar cod).